The following is a 149-amino-acid chain: Urease accessory protein UreE (149 aa).

The protein belongs to the UreE family.

Its subcellular location is the cytoplasm. Involved in urease metallocenter assembly. Binds nickel. Probably functions as a nickel donor during metallocenter assembly. The chain is Urease accessory protein UreE from Ureaplasma urealyticum serovar 10 (strain ATCC 33699 / Western).